Here is a 423-residue protein sequence, read N- to C-terminus: MAVDLLLGLQWGDEGKGKIVDVLTSKYDIIARFQGGPNAGHTLEFDGQKHVLHTIPSGIFHDDSINLVGNGVVIDPVIFKRELDNLAKHKIDYKSKLVISRKAHLILPTHRLLDAASEASKGKAKIGSTLKGIGPTYMDKTGRNGLRVGDLELEDWKDRYRALADKHEKMIAFYDVDVQYDLKELEKEFCTAVDTLKELTFIDSEEYLHQAMKSGKSILAEGAQGSLLDIDFGTYPFVTSSNTTAAGACTGLGVAPREIGEAFGIFKAYTTRVGSGPFPTELFDEVGERMGKVGNEFGATTGRKRRCGWLDLVALKYAVQVNGITQLIMMKGDVLSGFDTLKVCTAYKYKGKEITHLPFNIESGNIEPVYTEVKGWEEDLTKMTDASSLPKEFNEYVDFLEKELETPITIVSVGPDRKQTITR.

GTP is bound by residues Gly12–Lys18 and Gly40–Thr42. The active-site Proton acceptor is Asp13. Mg(2+) contacts are provided by Asp13 and Gly40. Residues Asp13 to Lys16, Asn38 to His41, Thr129, Arg143, Gln224, Thr239, and Arg303 each bind IMP. The active-site Proton donor is the His41. Position 299–305 (Ala299–Arg305) interacts with substrate. Residues Arg305, Lys331 to Asp333, and Ser412 to Gly414 each bind GTP.

This sequence belongs to the adenylosuccinate synthetase family. Homodimer. Mg(2+) serves as cofactor.

It localises to the cytoplasm. The catalysed reaction is IMP + L-aspartate + GTP = N(6)-(1,2-dicarboxyethyl)-AMP + GDP + phosphate + 2 H(+). The protein operates within purine metabolism; AMP biosynthesis via de novo pathway; AMP from IMP: step 1/2. Plays an important role in the de novo pathway of purine nucleotide biosynthesis. Catalyzes the first committed step in the biosynthesis of AMP from IMP. This is Adenylosuccinate synthetase from Christiangramia forsetii (strain DSM 17595 / CGMCC 1.15422 / KT0803) (Gramella forsetii).